The sequence spans 525 residues: Bifunctional pantoate ligase/cytidylate kinase (525 aa).

Positions 1–292 (MDNVPIIRTV…VGSARLIDNM (292 aa)) are pantoate--beta-alanine ligase. An ATP-binding site is contributed by 44–51 (MGALHAGH). The active-site Proton donor is His-51. Gln-75 is a (R)-pantoate binding site. Residue Gln-75 participates in beta-alanine binding. 162–165 (GQKD) lines the ATP pocket. A (R)-pantoate-binding site is contributed by Gln-168. Residues Ile-191 and 199-202 (LSSR) each bind ATP. The tract at residues 293 to 525 (LLDARLPILA…LYQERFPDRA (233 aa)) is cytidylate kinase.

The protein in the N-terminal section; belongs to the pantothenate synthetase family. In the C-terminal section; belongs to the cytidylate kinase family. Type 1 subfamily.

It is found in the cytoplasm. It carries out the reaction (R)-pantoate + beta-alanine + ATP = (R)-pantothenate + AMP + diphosphate + H(+). It catalyses the reaction CMP + ATP = CDP + ADP. The catalysed reaction is dCMP + ATP = dCDP + ADP. Its pathway is cofactor biosynthesis; (R)-pantothenate biosynthesis; (R)-pantothenate from (R)-pantoate and beta-alanine: step 1/1. Its function is as follows. Catalyzes the condensation of pantoate with beta-alanine in an ATP-dependent reaction via a pantoyl-adenylate intermediate. Catalyzes the transfer of a phosphate group from ATP to either CMP or dCMP to form CDP or dCDP and ADP, respectively. The chain is Bifunctional pantoate ligase/cytidylate kinase from Acaryochloris marina (strain MBIC 11017).